We begin with the raw amino-acid sequence, 103 residues long: Small ribosomal subunit protein uS10 (103 aa).

The protein belongs to the universal ribosomal protein uS10 family. Part of the 30S ribosomal subunit.

In terms of biological role, involved in the binding of tRNA to the ribosomes. The sequence is that of Small ribosomal subunit protein uS10 from Shewanella denitrificans (strain OS217 / ATCC BAA-1090 / DSM 15013).